A 542-amino-acid chain; its full sequence is MPIYDLIIKNGIICTASDIYAAEIAVNNGKVQLIAASIDPSLGSEVIDAEGAFITPGGIDAHVHVDEPLKLLGDVVDTMEHATRSAVAGGTTTVVAFSTQDVSKKGPSALAESVKLDVDEYSEQTLYCDYGLHLILFQIEKPSVEARELLDVQLQAAYNDYGVSSVKMFMTYPGLQISDYDIMSAMYATRKNGFTTMLHAENGDMVKWMIEALEEQGLTDAYYHGVSRPSIVEGEATNRAITLATTMDTPILFVHVSSPQAAEVIKQAQTKGLKVYAETCPQYALLSDAITRCHHHGEVESYGVGIDLSSISESPFTNPDDRFIGSKYICSPPIRPEGTQKSIWKGMNNGTFTIVGSDHCSYNYYEKTSTASKHRAFDPENNKNGEFRYIPNGLPGVCTRMPLLYDYGYLRGNLTSMMKLVEIQCTNPAKVYGMYPQKGSILPGVSDADLVIWYPDDSKKEYNSKPKLITNKLMEHNCDYTPFEGIEIKNWPRYTIVKGKIVYKEGEILKENADGKYLKRGKSFMCTPKNEWVTEWRPKYES.

Zn(2+) is bound by residues histidine 62, histidine 64, and lysine 167. An N6-carboxylysine modification is found at lysine 167. Tyrosine 172 is a substrate binding site. Zn(2+)-binding residues include histidine 199 and histidine 255. Serine 331 contacts substrate. Aspartate 358 contacts Zn(2+). Asparagine 392 is a substrate binding site.

Belongs to the metallo-dependent hydrolases superfamily. Hydantoinase/dihydropyrimidinase family. Homotetramer. It depends on Zn(2+) as a cofactor. Post-translationally, carboxylation allows a single lysine to coordinate two zinc ions.

It catalyses the reaction 5,6-dihydrouracil + H2O = 3-(carbamoylamino)propanoate + H(+). In terms of biological role, catalyzes the second step of the reductive pyrimidine degradation, the reversible hydrolytic ring opening of dihydropyrimidines. Can catalyze the ring opening of 5,6-dihydrouracil to N-carbamyl-alanine and of 5,6-dihydrothymine to N-carbamyl-amino isobutyrate. The protein is Dihydropyrimidinase (PYD2) of Lachancea kluyveri (strain ATCC 58438 / CBS 3082 / BCRC 21498 / NBRC 1685 / JCM 7257 / NCYC 543 / NRRL Y-12651) (Yeast).